A 169-amino-acid chain; its full sequence is 16S rRNA aminocarboxypropyltransferase (169 aa).

The S-adenosyl-L-methionine site is built by threonine 15, valine 65, leucine 88, and threonine 107.

Belongs to the TDD superfamily. TSR3 family.

Its subcellular location is the cytoplasm. It carries out the reaction an N(1)-methylpseudouridine in rRNA + S-adenosyl-L-methionine = N(1)-methyl-N(3)-[(3S)-3-amino-3-carboxypropyl]pseudouridine in rRNA + S-methyl-5'-thioadenosine + H(+). Its function is as follows. Aminocarboxypropyltransferase that catalyzes the aminocarboxypropyl transfer on pseudouridine corresponding to position 914 in M.jannaschii 16S rRNA. It constitutes the last step in biosynthesis of the hypermodified N1-methyl-N3-(3-amino-3-carboxypropyl) pseudouridine (m1acp3-Psi). This is 16S rRNA aminocarboxypropyltransferase from Methanopyrus kandleri (strain AV19 / DSM 6324 / JCM 9639 / NBRC 100938).